Here is a 484-residue protein sequence, read N- to C-terminus: Deoxyribodipyrimidine photo-lyase (484 aa).

Residues 3-132 (APILFWHRRD…RAVQLWDQLL (130 aa)) enclose the Photolyase/cryptochrome alpha/beta domain. Residues 36-38 (CLD), Arg-51, and 101-109 (DIEPYGRDR) each bind coenzyme F420-(gamma-Glu)n. The segment at 141 to 148 (GSGNPYSV) is DNA-binding. Tyr-228 is a binding site for FAD. A DNA-binding site is contributed by Arg-232. Position 240–247 (240–247 (TSGLSPAL)) interacts with FAD. Lys-248 contributes to the coenzyme F420-(gamma-Glu)n binding site. Interaction with DNA regions lie at residues 283 to 290 (ELAWREFY) and 349 to 350 (NR). FAD contacts are provided by residues 346–352 (WMHNRCW), 380–382 (DGD), and Asn-386. DNA is bound by residues Gln-411 and Lys-472.

This sequence belongs to the DNA photolyase class-1 family. In terms of assembly, monomer. The cofactor is FAD. Coenzyme F420-(gamma-Glu)n is required as a cofactor.

The enzyme catalyses cyclobutadipyrimidine (in DNA) = 2 pyrimidine residues (in DNA).. Involved in repair of UV radiation-induced DNA damage. Catalyzes the light-dependent monomerization (300-600 nm) of cyclobutyl pyrimidine dimers (in cis-syn configuration), which are formed between adjacent bases on the same DNA strand upon exposure to ultraviolet radiation. The polypeptide is Deoxyribodipyrimidine photo-lyase (phr) (Synechococcus sp. (strain ATCC 27144 / PCC 6301 / SAUG 1402/1) (Anacystis nidulans)).